A 259-amino-acid chain; its full sequence is Ribosomal RNA small subunit methyltransferase J (259 aa).

Residues 101–102, 117–118, 153–154, and D176 each bind S-adenosyl-L-methionine; these read RD, ER, and SS.

It belongs to the methyltransferase superfamily. RsmJ family.

It is found in the cytoplasm. The enzyme catalyses guanosine(1516) in 16S rRNA + S-adenosyl-L-methionine = N(2)-methylguanosine(1516) in 16S rRNA + S-adenosyl-L-homocysteine + H(+). Functionally, specifically methylates the guanosine in position 1516 of 16S rRNA. This is Ribosomal RNA small subunit methyltransferase J from Vibrio parahaemolyticus serotype O3:K6 (strain RIMD 2210633).